The chain runs to 145 residues: MGEKWKRQQKLCNVPHIPRIRVPRSASDTPLLKDLTQGQQRYFYSIMRIYSPRPQWEALQARYLHSLQHQQLLGYITQREASACAAVLRDSTKRASAKAGPHRTVPQRAAGRTRTQPSARPVCVIPLRARSTRLPSLRSRAVHKL.

Residues 92-121 (TKRASAKAGPHRTVPQRAAGRTRTQPSARP) are disordered.

This sequence belongs to the FAM216 family.

The protein is Protein FAM216B (FAM216B) of Bos taurus (Bovine).